Here is a 535-residue protein sequence, read N- to C-terminus: Atrial natriuretic peptide receptor 3 (535 aa).

An N-terminal signal peptide occupies residues 1-26; it reads MRSLLLFTFSACVLLARALLAGGASS. Residues 27-40 constitute a propeptide that is removed on maturation; the sequence is GGGDTGPGNRRRER. The Extracellular segment spans residues 41 to 477; it reads EALAAQKIEV…CKSCGLEESA (437 aa). A glycan (N-linked (GlcNAc...) asparagine) is linked at N81. Cystine bridges form between C103–C131 and C208–C256. 2 N-linked (GlcNAc...) asparagine glycosylation sites follow: N288 and N389. The helical transmembrane segment at 478 to 498 threads the bilayer; sequence VTGIVVGALLGAGLLMAFYFF. The Cytoplasmic segment spans residues 499-535; the sequence is RKKYRITIERRNHQEESNIGKHRELREDSIRSHFSVA.

Belongs to the ANF receptor family. As to quaternary structure, homodimer; disulfide-linked. Interacts with OSTN.

It is found in the cell membrane. Receptor for the natriuretic peptide hormones, binding with similar affinities atrial natriuretic peptide NPPA/ANP, brain natriuretic peptide NPPB/BNP, and C-type natriuretic peptide NPPC/CNP. May function as a clearance receptor for NPPA, NPPB and NPPC, regulating their local concentrations and effects. Acts as a regulator of osteoblast differentiation and bone growth by binding to its ligand osteocrin, thereby preventing binding between NPR3/NPR-C and natriuretic peptides, leading to increase cGMP production. This chain is Atrial natriuretic peptide receptor 3 (Npr3), found in Rattus norvegicus (Rat).